A 170-amino-acid chain; its full sequence is NADH-ubiquinone oxidoreductase chain 6 (170 aa).

Helical transmembrane passes span 1 to 21, 26 to 46, 49 to 69, 86 to 106, and 138 to 158; these read MIYM…AVAS, FYAA…IVSF, SFLS…VFAY, VVFY…FLGG, and WVII…GIWV.

The protein belongs to the complex I subunit 6 family. Core subunit of respiratory chain NADH dehydrogenase (Complex I) which is composed of 45 different subunits.

Its subcellular location is the mitochondrion inner membrane. The catalysed reaction is a ubiquinone + NADH + 5 H(+)(in) = a ubiquinol + NAD(+) + 4 H(+)(out). Core subunit of the mitochondrial membrane respiratory chain NADH dehydrogenase (Complex I) which catalyzes electron transfer from NADH through the respiratory chain, using ubiquinone as an electron acceptor. Essential for the catalytic activity and assembly of complex I. This is NADH-ubiquinone oxidoreductase chain 6 (mt-nd6) from Xenopus laevis (African clawed frog).